The sequence spans 68 residues: Cell division protein ZapB (68 aa).

Residues 3–58 are a coiled coil; that stretch reads LELLSKLETKIQAALETIELLKMELEEEKQKNHTLNEQNQQLSQDLTSWNEKVTGL.

This sequence belongs to the ZapB family. As to quaternary structure, homodimer. The ends of the coiled-coil dimer bind to each other, forming polymers. Interacts with FtsZ.

It localises to the cytoplasm. Non-essential, abundant cell division factor that is required for proper Z-ring formation. It is recruited early to the divisome by direct interaction with FtsZ, stimulating Z-ring assembly and thereby promoting cell division earlier in the cell cycle. Its recruitment to the Z-ring requires functional FtsA or ZipA. In Shewanella loihica (strain ATCC BAA-1088 / PV-4), this protein is Cell division protein ZapB.